The sequence spans 511 residues: ATP synthase subunit alpha (511 aa).

Residue 169-176 (GDRQTGKT) coordinates ATP.

This sequence belongs to the ATPase alpha/beta chains family. As to quaternary structure, F-type ATPases have 2 components, CF(1) - the catalytic core - and CF(0) - the membrane proton channel. CF(1) has five subunits: alpha(3), beta(3), gamma(1), delta(1), epsilon(1). CF(0) has three main subunits: a(1), b(2) and c(9-12). The alpha and beta chains form an alternating ring which encloses part of the gamma chain. CF(1) is attached to CF(0) by a central stalk formed by the gamma and epsilon chains, while a peripheral stalk is formed by the delta and b chains.

The protein localises to the cell inner membrane. It carries out the reaction ATP + H2O + 4 H(+)(in) = ADP + phosphate + 5 H(+)(out). Produces ATP from ADP in the presence of a proton gradient across the membrane. The alpha chain is a regulatory subunit. This is ATP synthase subunit alpha from Bartonella bacilliformis (strain ATCC 35685 / KC583 / Herrer 020/F12,63).